We begin with the raw amino-acid sequence, 308 residues long: MEVYLAQPRGFCAGVVRAIEIVERALEKFGPPVYVRHEIVHNKYVVESLKNKGAIFVEELSEVPPKAVTVFSAHGVARSVEEEAAARDLPVLNATCPLVTKVHNQGKRYITKGRTLILIGHAGHPEVEGTMGQVPAPVLLVQSVEEVNALTLPADTPVAYITQTTLSVDDTRDIISALQARFTDIQGPDIRDICYATQNRQSAVRDLSKLVDVILVVGAANSSNSNRLREIGTEAGVASYLIADGSELNPEWLKDARTVGVTAGASAPEVLVDDVIEAMRRIGPVKVQVLPGREENIEFRLPAELAAS.

A [4Fe-4S] cluster-binding site is contributed by C12. H41 and H74 together coordinate (2E)-4-hydroxy-3-methylbut-2-enyl diphosphate. Positions 41 and 74 each coordinate dimethylallyl diphosphate. Isopentenyl diphosphate contacts are provided by H41 and H74. C96 lines the [4Fe-4S] cluster pocket. H124 lines the (2E)-4-hydroxy-3-methylbut-2-enyl diphosphate pocket. H124 serves as a coordination point for dimethylallyl diphosphate. Residue H124 participates in isopentenyl diphosphate binding. Catalysis depends on E126, which acts as the Proton donor. (2E)-4-hydroxy-3-methylbut-2-enyl diphosphate is bound at residue T164. [4Fe-4S] cluster is bound at residue C194. (2E)-4-hydroxy-3-methylbut-2-enyl diphosphate contacts are provided by S222, S223, N224, and S266. Residues S222, S223, N224, and S266 each coordinate dimethylallyl diphosphate. The isopentenyl diphosphate site is built by S222, S223, N224, and S266.

Belongs to the IspH family. [4Fe-4S] cluster serves as cofactor.

It catalyses the reaction isopentenyl diphosphate + 2 oxidized [2Fe-2S]-[ferredoxin] + H2O = (2E)-4-hydroxy-3-methylbut-2-enyl diphosphate + 2 reduced [2Fe-2S]-[ferredoxin] + 2 H(+). The catalysed reaction is dimethylallyl diphosphate + 2 oxidized [2Fe-2S]-[ferredoxin] + H2O = (2E)-4-hydroxy-3-methylbut-2-enyl diphosphate + 2 reduced [2Fe-2S]-[ferredoxin] + 2 H(+). It participates in isoprenoid biosynthesis; dimethylallyl diphosphate biosynthesis; dimethylallyl diphosphate from (2E)-4-hydroxy-3-methylbutenyl diphosphate: step 1/1. Its pathway is isoprenoid biosynthesis; isopentenyl diphosphate biosynthesis via DXP pathway; isopentenyl diphosphate from 1-deoxy-D-xylulose 5-phosphate: step 6/6. Its function is as follows. Catalyzes the conversion of 1-hydroxy-2-methyl-2-(E)-butenyl 4-diphosphate (HMBPP) into a mixture of isopentenyl diphosphate (IPP) and dimethylallyl diphosphate (DMAPP). Acts in the terminal step of the DOXP/MEP pathway for isoprenoid precursor biosynthesis. This is 4-hydroxy-3-methylbut-2-enyl diphosphate reductase 2 from Bradyrhizobium diazoefficiens (strain JCM 10833 / BCRC 13528 / IAM 13628 / NBRC 14792 / USDA 110).